The sequence spans 363 residues: 3-isopropylmalate dehydrogenase (363 aa).

79–92 (GPKWEHLPPNDQPE) is a binding site for NAD(+). Substrate contacts are provided by Arg100, Arg110, Arg139, and Asp228. Mg(2+) contacts are provided by Asp228, Asp252, and Asp256. NAD(+) is bound at residue 286–298 (GSAPDIAGKNIAN).

Belongs to the isocitrate and isopropylmalate dehydrogenases family. LeuB type 1 subfamily. Homodimer. Mg(2+) is required as a cofactor. Mn(2+) serves as cofactor.

Its subcellular location is the cytoplasm. The catalysed reaction is (2R,3S)-3-isopropylmalate + NAD(+) = 4-methyl-2-oxopentanoate + CO2 + NADH. It participates in amino-acid biosynthesis; L-leucine biosynthesis; L-leucine from 3-methyl-2-oxobutanoate: step 3/4. Functionally, catalyzes the oxidation of 3-carboxy-2-hydroxy-4-methylpentanoate (3-isopropylmalate) to 3-carboxy-4-methyl-2-oxopentanoate. The product decarboxylates to 4-methyl-2 oxopentanoate. In Aliivibrio fischeri (strain ATCC 700601 / ES114) (Vibrio fischeri), this protein is 3-isopropylmalate dehydrogenase.